Here is a 445-residue protein sequence, read N- to C-terminus: tRNA-2-methylthio-N(6)-dimethylallyladenosine synthase (445 aa).

Positions 3-124 constitute an MTTase N-terminal domain; it reads KKLYIKTYGC…LPELISKVVR (122 aa). Positions 12, 48, 87, 162, 166, and 169 each coordinate [4Fe-4S] cluster. A Radical SAM core domain is found at 148–380; that stretch reads YPQGASSFIS…QQELATQQLA (233 aa). The region spanning 383-445 is the TRAM domain; it reads QSCVGSTMRV…ALNSLTGEIL (63 aa).

Belongs to the methylthiotransferase family. MiaB subfamily. In terms of assembly, monomer. It depends on [4Fe-4S] cluster as a cofactor.

It localises to the cytoplasm. It carries out the reaction N(6)-dimethylallyladenosine(37) in tRNA + (sulfur carrier)-SH + AH2 + 2 S-adenosyl-L-methionine = 2-methylsulfanyl-N(6)-dimethylallyladenosine(37) in tRNA + (sulfur carrier)-H + 5'-deoxyadenosine + L-methionine + A + S-adenosyl-L-homocysteine + 2 H(+). Catalyzes the methylthiolation of N6-(dimethylallyl)adenosine (i(6)A), leading to the formation of 2-methylthio-N6-(dimethylallyl)adenosine (ms(2)i(6)A) at position 37 in tRNAs that read codons beginning with uridine. In Rickettsia prowazekii (strain Madrid E), this protein is tRNA-2-methylthio-N(6)-dimethylallyladenosine synthase.